We begin with the raw amino-acid sequence, 231 residues long: Aquaporin Z (231 aa).

2 helical membrane-spanning segments follow: residues L9–F29 and I34–V54. The short motif at N63–A65 is the NPA 1 element. 3 helical membrane-spanning segments follow: residues I82–I102, S133–T153, and G160–I180. An NPA 2 motif is present at residues N186–A188. Residues L202–I222 form a helical membrane-spanning segment.

It belongs to the MIP/aquaporin (TC 1.A.8) family. Homotetramer.

It is found in the cell inner membrane. It carries out the reaction H2O(in) = H2O(out). Functionally, channel that permits osmotically driven movement of water in both directions. It is involved in the osmoregulation and in the maintenance of cell turgor during volume expansion in rapidly growing cells. It mediates rapid entry or exit of water in response to abrupt changes in osmolarity. The chain is Aquaporin Z from Photorhabdus laumondii subsp. laumondii (strain DSM 15139 / CIP 105565 / TT01) (Photorhabdus luminescens subsp. laumondii).